Reading from the N-terminus, the 662-residue chain is Transmembrane 9 superfamily member 2 (662 aa).

An N-terminal signal peptide occupies residues 1–28 (MSSRPPASPPAQGSRLLLLSLLLLGTVP). The Lumenal segment spans residues 29-299 (GPRPGSAFYL…LESMPHTHIQ (271 aa)). A helical transmembrane segment spans residues 300 to 320 (WFSIMNSLVIVLFLSGMVAMI). Over 321–373 (MLRTLHKDIARYNQMDSTEDAQEEFGWKLVHGDIFRPPRKGMLLSVFLGSGTQ) the chain is Cytoplasmic. Residues 374 to 394 (ILIMTFVTLFFACLGFLSPAN) form a helical membrane-spanning segment. Residues 395 to 397 (RGA) lie on the Lumenal side of the membrane. The chain crosses the membrane as a helical span at residues 398 to 418 (LMTCAVVLWVLLGTPAGYVAA). Residues 419–436 (RFYKSFGGEKWKTNVLLT) lie on the Cytoplasmic side of the membrane. A helical membrane pass occupies residues 437–457 (SFLCPGIVFADFFIMNLILWG). Residues 458–465 (EGSSAAIP) are Lumenal-facing. The helical transmembrane segment at 466-486 (FGTLVAILALWFCISVPLTFI) threads the bilayer. Over 487 to 521 (GAYFGFKKNAIEHPVRTNQIPRQIPEQSFYTKPLP) the chain is Cytoplasmic. The helical transmembrane segment at 522–542 (GIIMGGILPFGCIFIQLFFIL) threads the bilayer. The Lumenal segment spans residues 543-553 (NSIWSHQMYYM). A helical membrane pass occupies residues 554-574 (FGFLFLVFIILVITCSEATIL). Over 575–590 (LCYFHLCAEDYHWQWR) the chain is Cytoplasmic. A helical transmembrane segment spans residues 591–611 (SFLTSGFTAVYFLIYAIHYFF). Residues 612–630 (SKLQITGTASTILYFGYTM) are Lumenal-facing. A helical membrane pass occupies residues 631-651 (IMVLIFFLFTGTIGFFACFWF). At 652 to 662 (VTKIYSVVKVD) the chain is on the cytoplasmic side.

Belongs to the nonaspanin (TM9SF) (TC 9.A.2) family.

It is found in the endosome membrane. The protein resides in the golgi outpost. It localises to the cytoplasm. Its subcellular location is the cytoskeleton. The protein localises to the microtubule organizing center. Its function is as follows. In the intracellular compartments, may function as a channel or small molecule transporter. This Mus musculus (Mouse) protein is Transmembrane 9 superfamily member 2 (Tm9sf2).